The chain runs to 486 residues: F-box protein At1g80960 (486 aa).

Residues Val-49 to Arg-97 enclose the F-box domain.

The protein is F-box protein At1g80960 of Arabidopsis thaliana (Mouse-ear cress).